We begin with the raw amino-acid sequence, 2186 residues long: Non-reducing polyketide synthase men2 (2186 aa).

The region spanning 16 to 255 (FFGDQTVDAL…MQLPLGTPAH (240 aa)) is the Starter acyltransferase (SAT) domain. Residues 382–815 (SNLIAVVGQS…GGNNCVLLEE (434 aa)) enclose the Ketosynthase family 3 (KS3) domain. Active-site for beta-ketoacyl synthase activity residues include C554, H690, and H729. The Malonyl-CoA:ACP transacylase (MAT) domain occupies 914–1204 (VFAFTGQGAQ…SSLVKSTLSA (291 aa)). The segment at 1299-1623 (TASLQQVRSE…TRRVLATVLG (325 aa)) is product template (PT) domain. The tract at residues 1303–1434 (QQVRSEQING…CKLHFDKRGS (132 aa)) is N-terminal hotdog fold. The PKS/mFAS DH domain occupies 1303 to 1619 (QQVRSEQING…FQRLTRRVLA (317 aa)). H1335 acts as the Proton acceptor; for dehydratase activity in catalysis. The C-terminal hotdog fold stretch occupies residues 1463–1619 (TGHRLPKSVV…FQRLTRRVLA (157 aa)). The Proton donor; for dehydratase activity role is filled by D1523. The region spanning 1666–1742 (VGDEKADAAI…GLRRAISELS (77 aa)) is the Carrier 1 domain. The residue at position 1702 (S1702) is an O-(pantetheine 4'-phosphoryl)serine. A disordered region spans residues 1747–1785 (GPASGSVSVSSSATTTHGMTTPSSTSSAQSSQSSQTPDG). Residues 1749-1783 (ASGSVSVSSSATTTHGMTTPSSTSSAQSSQSSQTP) show a composition bias toward low complexity. Residues 1784–1861 (DGPGIYANAV…HVRRALGSDS (78 aa)) enclose the Carrier 2 domain. An O-(pantetheine 4'-phosphoryl)serine modification is found at S1821. A disordered region spans residues 1857 to 1878 (LGSDSDGDSKPKSAPAPPAPEP). The segment at 1921-2163 (LFFLPDGTGY…TMPCDHLSLL (243 aa)) is thioesterase (TE) domain.

The cofactor is pantetheine 4'-phosphate.

It participates in secondary metabolite biosynthesis. In terms of biological role, non-reducing polyketide synthase; part of the gene cluster that mediates the biosynthesis of menisporopsin A, a bioactive macrocyclic polylactone. The biosynthesis of menisporopsin A is performed by a reducing (man1) and a non-reducing (men2) polyketide synthase that catalyze the formation of each menisporopsin A subunits, while the esterification and cyclolactonization activities are probably peformed by the unusual thioesterase domain of men2. First, a reduced diketide intermediate, 3-hydroxybutyryl-S-ACP is produced by men1 and transferred to men2; this is followed by a second reduced diketide which is further elongated using 3 units of malonyl-coA to form a reduced pentaketide. The cyclization of this intermediate by the PT domain forms the second subunit, 2,4-dihydroxy-6-(2-hydroxy-n-propyl)benzoyl-S-ACP. The TE domain of men2 then esterifies the secondary hydroxyl group on the side chain of the second subunit with the acyl-TE of the first subunit to form the first ester intermediate. This process occurs iteratively to form a linear tetraester intermediate. The final subunit is formed by a similar process, except that an extra malonyl-CoA is required in an additional elongation step to form a reduced hexaketide intermediate, and the carbonyl group next to the secondary hydroxyl group is reduced by a trans-acting ketoreductase. Again, the PT domain catalyzes cyclization to form the largest subunit, 2,4-dihydroxy-6-(2,4-dihydroxy-n-pentyl) benzoyl-S-ACP. Then the linear pentaester intermediate is formed. In this step, if the intermediate transfer rate is slow, intra- molecular cyclization involving the secondary hydroxyl group of the pentaester intermediate may occur to form menisporopsin B. Alternatively, transfer of the pentaester intermediate to the TE domain would allow cyclolactonization to be catalyzed by the TE to form menisporopsin A. This is Non-reducing polyketide synthase men2 from Menisporopsis theobromae.